Reading from the N-terminus, the 948-residue chain is Protocadherin alpha-2 (948 aa).

The N-terminal stretch at 1-22 is a signal peptide; the sequence is MASSIRRGLGAWTRLLSLLLLA. The Extracellular segment spans residues 23–697; the sequence is AWEVGSGQLR…GSEATLVDVN (675 aa). Cadherin domains are found at residues 30–133, 157–242, 243–350, 351–455, 456–565, and 588–678; these read QLRY…PPVF, ASDA…EPTF, AQSV…TPEV, SITS…APAF, AQPE…APAL, and GHVV…APKA. N-linked (GlcNAc...) asparagine glycosylation is found at Asn-257, Asn-265, Asn-362, and Asn-548. A helical membrane pass occupies residues 698 to 718; that stretch reads VYLIIAICAVSSLLVLTVLLY. The Cytoplasmic portion of the chain corresponds to 719–948; the sequence is TALRCSVPAT…GNSTTDNSDQ (230 aa). The PXXP 1 repeat unit spans residues 734–737; that stretch reads PGKP. Residues 734 to 892 form a 5 X 4 AA repeats of P-X-X-P region; that stretch reads PGKPTLVCSS…PDKFIIPGSP (159 aa). Disordered stretches follow at residues 755 to 801, 829 to 854, and 868 to 948; these read RQRV…RQPN, GPGG…EVSP, and KYGP…NSDQ. Basic and acidic residues predominate over residues 783-795; that stretch reads AEEKQLSESEYVG. PXXP repeat units follow at residues 797-800, 830-833, 871-874, and 889-892; these read PRQP, PGGP, PGNP, and PGSP. Residues 907–921 are compositionally biased toward basic and acidic residues; that stretch reads DKSDFITFGKKEETK.

Its subcellular location is the cell membrane. Functionally, potential calcium-dependent cell-adhesion protein. May be involved in the establishment and maintenance of specific neuronal connections in the brain. This is Protocadherin alpha-2 (PCDHA2) from Pan troglodytes (Chimpanzee).